The sequence spans 474 residues: Adenosylhomocysteinase (474 aa).

3 residues coordinate substrate: T61, D136, and E196. 197–199 (TTT) contacts NAD(+). Positions 226 and 230 each coordinate substrate. NAD(+) contacts are provided by residues N231, 260 to 265 (GYGDVG), E283, N318, 339 to 341 (IGH), and N384.

This sequence belongs to the adenosylhomocysteinase family. The cofactor is NAD(+).

The protein localises to the cytoplasm. The enzyme catalyses S-adenosyl-L-homocysteine + H2O = L-homocysteine + adenosine. It participates in amino-acid biosynthesis; L-homocysteine biosynthesis; L-homocysteine from S-adenosyl-L-homocysteine: step 1/1. In terms of biological role, may play a key role in the regulation of the intracellular concentration of adenosylhomocysteine. This chain is Adenosylhomocysteinase, found in Ralstonia nicotianae (strain ATCC BAA-1114 / GMI1000) (Ralstonia solanacearum).